The sequence spans 251 residues: Triosephosphate isomerase (251 aa).

9 to 11 (NWK) provides a ligand contact to substrate. Residue histidine 94 is the Electrophile of the active site. Glutamate 166 (proton acceptor) is an active-site residue. Substrate is bound by residues glycine 172, serine 211, and 232–233 (GG).

Belongs to the triosephosphate isomerase family. In terms of assembly, homodimer.

The protein localises to the cytoplasm. The enzyme catalyses D-glyceraldehyde 3-phosphate = dihydroxyacetone phosphate. The protein operates within carbohydrate biosynthesis; gluconeogenesis. It participates in carbohydrate degradation; glycolysis; D-glyceraldehyde 3-phosphate from glycerone phosphate: step 1/1. Its function is as follows. Involved in the gluconeogenesis. Catalyzes stereospecifically the conversion of dihydroxyacetone phosphate (DHAP) to D-glyceraldehyde-3-phosphate (G3P). The chain is Triosephosphate isomerase from Stenotrophomonas maltophilia (strain R551-3).